The following is a 271-amino-acid chain: Protein FANTASTIC FOUR 1 (271 aa).

The FAF domain occupies 114–168; the sequence is NSFPPPLNSVNGFNNSRMVKSYKEDGRLVVQAIRVCSPPRCFVSERREGRLRLCL. Residues 174–255 are disordered; sequence NSQDAEEEFE…KRRCNENGCE (82 aa). Over residues 177-224 the composition is skewed to acidic residues; the sequence is DAEEEFEEEDEDDQYDAEEEEEEEEEEEEEEEEEEEEEEEEEEEDEEG. Residues 237–247 show a composition bias toward basic residues; the sequence is GNKKVSNRPKR.

The protein belongs to the fantastic four family. Expressed in the shoot apex, stamens, anthers and young siliques. Detected in provascular and vascular tissue.

Functionally, able to repress WUS when constitutively overexpressed, but have no effect on CLV3. This is Protein FANTASTIC FOUR 1 (FAF1) from Arabidopsis thaliana (Mouse-ear cress).